The sequence spans 345 residues: Dihydroorotate dehydrogenase (quinone) (345 aa).

FMN contacts are provided by residues 65 to 69 (AGLDK) and T89. K69 is a substrate binding site. 114–118 (NRMGF) serves as a coordination point for substrate. FMN-binding residues include N142 and N175. Residue N175 coordinates substrate. S178 (nucleophile) is an active-site residue. N180 provides a ligand contact to substrate. Residues K220 and T248 each coordinate FMN. Position 249-250 (249-250 (NT)) interacts with substrate. FMN-binding positions include G271, G300, and 321-322 (YT).

It belongs to the dihydroorotate dehydrogenase family. Type 2 subfamily. Monomer. FMN is required as a cofactor.

It localises to the cell membrane. The catalysed reaction is (S)-dihydroorotate + a quinone = orotate + a quinol. Its pathway is pyrimidine metabolism; UMP biosynthesis via de novo pathway; orotate from (S)-dihydroorotate (quinone route): step 1/1. Catalyzes the conversion of dihydroorotate to orotate with quinone as electron acceptor. The protein is Dihydroorotate dehydrogenase (quinone) of Burkholderia cenocepacia (strain HI2424).